A 35-amino-acid chain; its full sequence is Photosystem II reaction center protein T (35 aa).

The chain crosses the membrane as a helical span at residues 3–23 (ALVYTFLLVSTLGIIFFAIFF).

This sequence belongs to the PsbT family. PSII is composed of 1 copy each of membrane proteins PsbA, PsbB, PsbC, PsbD, PsbE, PsbF, PsbH, PsbI, PsbJ, PsbK, PsbL, PsbM, PsbT, PsbY, PsbZ, Psb30/Ycf12, at least 3 peripheral proteins of the oxygen-evolving complex and a large number of cofactors. It forms dimeric complexes.

The protein localises to the plastid. Its subcellular location is the chloroplast thylakoid membrane. In terms of biological role, found at the monomer-monomer interface of the photosystem II (PS II) dimer, plays a role in assembly and dimerization of PSII. PSII is a light-driven water plastoquinone oxidoreductase, using light energy to abstract electrons from H(2)O, generating a proton gradient subsequently used for ATP formation. The polypeptide is Photosystem II reaction center protein T (Bassia hyssopifolia (Fivehorn smotherweed)).